The primary structure comprises 153 residues: DNA gyrase inhibitor (153 aa).

The protein belongs to the DNA gyrase inhibitor family. In terms of assembly, interacts with DNA gyrase.

The protein resides in the cytoplasm. Its function is as follows. Inhibits the supercoiling activity of DNA gyrase. Acts by inhibiting DNA gyrase at an early step, prior to (or at the step of) binding of DNA by the gyrase. It protects cells against toxins that target DNA gyrase, by inhibiting activity of these toxins and reducing the formation of lethal double-strand breaks in the cell. The protein is DNA gyrase inhibitor of Pantoea sp. (strain At-9b).